A 284-amino-acid polypeptide reads, in one-letter code: uncharacterized protein (284 aa).

Residues 1–27 (MSNLPTSTPVSPSNLAEENPKSNNPES) are compositionally biased toward polar residues. Disordered stretches follow at residues 1–29 (MSNL…ESSE) and 248–284 (TRDS…LKKK).

This is an uncharacterized protein from Caenorhabditis elegans.